Reading from the N-terminus, the 410-residue chain is Lipoyl synthase, mitochondrial (410 aa).

The transit peptide at 1–29 directs the protein to the mitochondrion; it reads MASTTVCSAARIRVASSQVLRSIANTRTY. The segment covering 29 to 39 has biased composition (polar residues); sequence YATTSPESSIP. The disordered stretch occupies residues 29–49; the sequence is YATTSPESSIPETKPTAKRTP. [4Fe-4S] cluster is bound by residues cysteine 129, cysteine 134, cysteine 140, cysteine 160, cysteine 164, cysteine 167, and serine 375. In terms of domain architecture, Radical SAM core spans 143 to 364; that stretch reads GGSKAAATAT…KEKAMEMGFL (222 aa).

The protein belongs to the radical SAM superfamily. Lipoyl synthase family. The cofactor is [4Fe-4S] cluster.

The protein localises to the mitochondrion. It catalyses the reaction [[Fe-S] cluster scaffold protein carrying a second [4Fe-4S](2+) cluster] + N(6)-octanoyl-L-lysyl-[protein] + 2 oxidized [2Fe-2S]-[ferredoxin] + 2 S-adenosyl-L-methionine + 4 H(+) = [[Fe-S] cluster scaffold protein] + N(6)-[(R)-dihydrolipoyl]-L-lysyl-[protein] + 4 Fe(3+) + 2 hydrogen sulfide + 2 5'-deoxyadenosine + 2 L-methionine + 2 reduced [2Fe-2S]-[ferredoxin]. The protein operates within protein modification; protein lipoylation via endogenous pathway; protein N(6)-(lipoyl)lysine from octanoyl-[acyl-carrier-protein]: step 2/2. Functionally, catalyzes the radical-mediated insertion of two sulfur atoms into the C-6 and C-8 positions of the octanoyl moiety bound to the lipoyl domains of lipoate-dependent enzymes, thereby converting the octanoylated domains into lipoylated derivatives. This chain is Lipoyl synthase, mitochondrial, found in Arthroderma otae (strain ATCC MYA-4605 / CBS 113480) (Microsporum canis).